The chain runs to 307 residues: Mitochondrial brown fat uncoupling protein 1 (307 aa).

Residues 1–10 are Mitochondrial intermembrane-facing; it reads MVSSTTSEVQ. The chain crosses the membrane as a helical span at residues 11 to 32; that stretch reads PTMGVKIFSAGVSACLADIITF. 3 Solcar repeats span residues 11 to 102, 111 to 201, and 210 to 295; these read PTMG…VQEY, ASLG…MKGA, and DDVP…LKKE. Topologically, residues 33 to 73 are mitochondrial matrix; sequence PLDTAKVRLQIQGEGQASSTIRYKGVLGTITTLAKTEGLPK. A fatty acid 16:0-binding site is contributed by Lys-56. A helical transmembrane segment spans residues 74–96; sequence LYSGLPAGIQRQISFASLRIGLY. Residues 97 to 116 lie on the Mitochondrial intermembrane side of the membrane; the sequence is DTVQEYFSSGRETPASLGSK. Residues 117-133 traverse the membrane as a helical segment; sequence ISAGLMTGGVAVFIGQP. Residues 134 to 178 lie on the Mitochondrial matrix side of the membrane; that stretch reads TEVVKVRMQAQSHLHGIKPRYTGTYNAYRVIATTESLSTLWKGTT. A helical transmembrane segment spans residues 179–195; the sequence is PNLMRNVIINCTELVTY. The Mitochondrial intermembrane segment spans residues 196 to 212; the sequence is DLMKGALVNHHILADDV. The chain crosses the membrane as a helical span at residues 213-232; sequence PCHLLSALVAGFCTTLLASP. Over 233-266 the chain is Mitochondrial matrix; it reads VDVVKTRFINSLPGQYPSVPSCAMTMYTKEGPAA. At Cys-254 the chain carries Cysteine sulfenic acid (-SOH). Residues 267-289 form a helical membrane-spanning segment; sequence FFKGFAPSFLRLGSWNVIMFVCF. Residue Lys-269 coordinates fatty acid 16:0. At 290–307 the chain is on the mitochondrial intermembrane side; the sequence is EQLKKELMKSRQTVDCTT.

The protein belongs to the mitochondrial carrier (TC 2.A.29) family. As to quaternary structure, most probably functions as a monomer. Binds one purine nucleotide per monomer. However, has also been suggested to function as a homodimer or a homotetramer. Tightly associates with cardiolipin in the mitochondrion inner membrane; may stabilize and regulate its activity. May undergo ubiquitin-mediated proteasomal degradation. Post-translationally, may undergo sulfenylation upon cold exposure. May increase the sensitivity of UCP1 thermogenic function to the activation by noradrenaline probably through structural effects. In terms of tissue distribution, brown adipose tissue.

It localises to the mitochondrion inner membrane. The enzyme catalyses H(+)(in) = H(+)(out). Has no constitutive proton transporter activity and has to be activated by long-chain fatty acids/LCFAs. Inhibited by purine nucleotides. Both purine nucleotides and LCFAs bind the cytosolic side of the transporter and directly compete to activate or inhibit it. Activated by noradrenaline and reactive oxygen species. Despite lacking canonical translational encoding for selenocysteine, a small pool of the protein has been observed to selectively incorporate selenocysteine at 'Cys-254'. Selenocysteine-modified protein is highly sensitive to redox modification and may constitute a pool of protein highly sensitive to activation by elevated levels of reactive oxygen species (ROS). In terms of biological role, mitochondrial protein responsible for thermogenic respiration, a specialized capacity of brown adipose tissue and beige fat that participates in non-shivering adaptive thermogenesis to temperature and diet variations and more generally to the regulation of energy balance. Functions as a long-chain fatty acid/LCFA and proton symporter, simultaneously transporting one LCFA and one proton through the inner mitochondrial membrane. However, LCFAs remaining associated with the transporter via their hydrophobic tails, it results in an apparent transport of protons activated by LCFAs. Thereby, dissipates the mitochondrial proton gradient and converts the energy of substrate oxydation into heat instead of ATP. Regulates the production of reactive oxygen species/ROS by mitochondria. This Rattus norvegicus (Rat) protein is Mitochondrial brown fat uncoupling protein 1.